We begin with the raw amino-acid sequence, 361 residues long: Spermidine/putrescine import ATP-binding protein PotA (361 aa).

Positions 4–234 (LEIKNVVKRF…PKNRFVADFL (231 aa)) constitute an ABC transporter domain. An ATP-binding site is contributed by 36 to 43 (GPSGCGKT).

This sequence belongs to the ABC transporter superfamily. Spermidine/putrescine importer (TC 3.A.1.11.1) family. The complex is composed of two ATP-binding proteins (PotA), two transmembrane proteins (PotB and PotC) and a solute-binding protein (PotD).

The protein localises to the cell inner membrane. The catalysed reaction is ATP + H2O + polyamine-[polyamine-binding protein]Side 1 = ADP + phosphate + polyamineSide 2 + [polyamine-binding protein]Side 1.. Part of the ABC transporter complex PotABCD involved in spermidine/putrescine import. Responsible for energy coupling to the transport system. The polypeptide is Spermidine/putrescine import ATP-binding protein PotA (Chromobacterium violaceum (strain ATCC 12472 / DSM 30191 / JCM 1249 / CCUG 213 / NBRC 12614 / NCIMB 9131 / NCTC 9757 / MK)).